The following is a 166-amino-acid chain: Seed allergenic protein RAG2 (166 aa).

The signal sequence occupies residues 1–26; the sequence is MASNKVVFSALLLIIVSVLAATATMA. 5 disulfide bridges follow: C41–C93, C55–C81, C63–C125, C82–C141, and C95–C153. N-linked (GlcNAc...) asparagine glycosylation occurs at N147.

It belongs to the cereal trypsin/alpha-amylase inhibitor family. In terms of processing, five disulfide bonds are present.

The protein resides in the secreted. Seed storage protein. This chain is Seed allergenic protein RAG2 (RAG2), found in Oryza sativa subsp. japonica (Rice).